The primary structure comprises 347 residues: Isopentenyl-diphosphate delta-isomerase (347 aa).

9-10 (RK) contributes to the substrate binding site. Residues S67, 68-70 (SMT), S98, and N127 each bind FMN. 98–100 (SQR) provides a ligand contact to substrate. Substrate is bound at residue Q162. Residue E163 participates in Mg(2+) binding. Residues K194, T224, 274-276 (GIR), and 295-296 (AA) contribute to the FMN site.

Belongs to the IPP isomerase type 2 family. Homooctamer. Dimer of tetramers. Requires FMN as cofactor. The cofactor is NADPH. It depends on Mg(2+) as a cofactor.

It is found in the cytoplasm. The catalysed reaction is isopentenyl diphosphate = dimethylallyl diphosphate. Its function is as follows. Involved in the biosynthesis of isoprenoids. Catalyzes the 1,3-allylic rearrangement of the homoallylic substrate isopentenyl (IPP) to its allylic isomer, dimethylallyl diphosphate (DMAPP). This is Isopentenyl-diphosphate delta-isomerase from Cronobacter sakazakii (strain ATCC BAA-894) (Enterobacter sakazakii).